We begin with the raw amino-acid sequence, 424 residues long: Putative fasciclin-like arabinogalactan protein 20 (424 aa).

A helical membrane pass occupies residues 46–66 (LLTTFFLIFFVLDIDLVATSM). Residues 56–194 (VLDIDLVATS…YVVIYGSDEF (139 aa)) form the FAS1 1 domain. Residues Asn153 and Asn160 are each glycosylated (N-linked (GlcNAc...) asparagine). Over residues 199–226 (TKISDDSSSSSSIPSTTSSTGSIPIPSS) the composition is skewed to low complexity. The tract at residues 199-246 (TKISDDSSSSSSIPSTTSSTGSIPIPSSATQTPPSPNIASDSTRNLPN) is disordered. Positions 227 to 246 (ATQTPPSPNIASDSTRNLPN) are enriched in polar residues. N-linked (GlcNAc...) asparagine glycans are attached at residues Asn246, Asn283, and Asn287. One can recognise an FAS1 2 domain in the interval 250–384 (PVNRFNIFES…IAVHGFNQMI (135 aa)). Residues 405-424 (QEEEGVHGEYSSELGDYGLH) are disordered.

The protein belongs to the fasciclin-like AGP family.

The protein localises to the membrane. May be a cell surface adhesion protein. This chain is Putative fasciclin-like arabinogalactan protein 20 (FLA20), found in Arabidopsis thaliana (Mouse-ear cress).